Consider the following 195-residue polypeptide: Molybdenum cofactor guanylyltransferase (195 aa).

GTP contacts are provided by residues 12 to 14 (LAG), K25, N53, D70, and D100. D100 provides a ligand contact to Mg(2+).

This sequence belongs to the MobA family. In terms of assembly, monomer. Mg(2+) serves as cofactor.

It localises to the cytoplasm. It catalyses the reaction Mo-molybdopterin + GTP + H(+) = Mo-molybdopterin guanine dinucleotide + diphosphate. Transfers a GMP moiety from GTP to Mo-molybdopterin (Mo-MPT) cofactor (Moco or molybdenum cofactor) to form Mo-molybdopterin guanine dinucleotide (Mo-MGD) cofactor. The protein is Molybdenum cofactor guanylyltransferase of Vibrio vulnificus (strain YJ016).